The sequence spans 276 residues: 2-dehydro-3-deoxyphosphooctonate aldolase (276 aa).

The protein belongs to the KdsA family.

It is found in the cytoplasm. The enzyme catalyses D-arabinose 5-phosphate + phosphoenolpyruvate + H2O = 3-deoxy-alpha-D-manno-2-octulosonate-8-phosphate + phosphate. It participates in carbohydrate biosynthesis; 3-deoxy-D-manno-octulosonate biosynthesis; 3-deoxy-D-manno-octulosonate from D-ribulose 5-phosphate: step 2/3. The polypeptide is 2-dehydro-3-deoxyphosphooctonate aldolase (Stenotrophomonas maltophilia (strain K279a)).